Consider the following 113-residue polypeptide: Protein translation factor SUI1 homolog (113 aa).

The protein belongs to the SUI1 family.

Probably involved in translation. The sequence is that of Protein translation factor SUI1 homolog from Salix bakko (Japanese willow).